Reading from the N-terminus, the 922-residue chain is Disintegrin and metalloproteinase domain-containing protein 10 homolog (922 aa).

A signal peptide spans 1-26; sequence MSSPIRNRLQLVVTLIFCLFFENVNG. The propeptide occupies 27-228; it reads LNNFIDNFET…YMTMGGRSKR (202 aa). 3 N-linked (GlcNAc...) asparagine glycosylation sites follow: Asn74, Asn185, and Asn346. The Extracellular segment spans residues 229 to 745; the sequence is ANTLRDHDGL…ETLTQWAQDN (517 aa). Residues 242–480 form the Peptidase M12B domain; it reads RTCSLYMQAD…CSVKNISAVL (239 aa). Zn(2+) is bound at residue His426. Residue Glu427 is part of the active site. Zn(2+)-binding residues include His430 and His436. Residues Cys442 and Cys471 are joined by a disulfide bond. N-linked (GlcNAc...) asparagine glycosylation occurs at Asn475. The region spanning 511 to 615 is the Disintegrin domain; that stretch reads SAFCGNQIYE…QCPVSPPKHD (105 aa). 5 disulfide bridges follow: Cys542-Cys577, Cys564-Cys572, Cys588-Cys607, Cys594-Cys626, and Cys619-Cys631. Asn632 carries an N-linked (GlcNAc...) asparagine glycan. 4 disulfide bridges follow: Cys636-Cys659, Cys644-Cys665, Cys655-Cys707, and Cys700-Cys713. Asn677 is a glycosylation site (N-linked (GlcNAc...) asparagine). Residues 746–766 form a helical membrane-spanning segment; sequence WWVVGVGGLVFLVIMALFVKC. The Cytoplasmic segment spans residues 767-922; sequence CAVHTPSTNP…SGNGGKKKGK (156 aa). Disordered regions lie at residues 797–837 and 864–922; these read QHRQ…PSAP and PGSS…KKGK. Positions 805 to 834 are enriched in low complexity; that stretch reads AAGSVPPGPGAQPRSGAASAPSRTTPSARP.

In terms of assembly, may interact with tetraspanin tsp-12; the interaction promotes sup-17 cell membrane localization. Zn(2+) is required as a cofactor. Expressed in the germline.

The protein resides in the cell membrane. The protein localises to the basolateral cell membrane. It localises to the cytoplasmic vesicle membrane. The catalysed reaction is Endopeptidase of broad specificity.. Functionally, metalloprotease. Acts together with protease adm-4 and in a cell autonomous manner to facilitate lin-12/Notch signaling during developmental cell fate decision, including anchor cell/ventral uterine precursor cell decision and vulva precursor cell specification. By modulating glp-1/Notch signaling, plays a role in germline development. Probably by modulating BMP-like Sma/Mab signaling via the shedding of unc-40 ectodomain, involved in the regulation of body size and mesoderm development. Probably by shedding ephrin efn-4, regulates axon guidance of SDQL neuron during development. The polypeptide is Disintegrin and metalloproteinase domain-containing protein 10 homolog (Caenorhabditis elegans).